Here is a 291-residue protein sequence, read N- to C-terminus: Acetylglutamate kinase (291 aa).

Substrate is bound by residues 64–65, R86, and N190; that span reads GG.

This sequence belongs to the acetylglutamate kinase family. ArgB subfamily.

The protein resides in the cytoplasm. The enzyme catalyses N-acetyl-L-glutamate + ATP = N-acetyl-L-glutamyl 5-phosphate + ADP. Its pathway is amino-acid biosynthesis; L-arginine biosynthesis; N(2)-acetyl-L-ornithine from L-glutamate: step 2/4. In terms of biological role, catalyzes the ATP-dependent phosphorylation of N-acetyl-L-glutamate. The chain is Acetylglutamate kinase from Leptospira borgpetersenii serovar Hardjo-bovis (strain JB197).